A 284-amino-acid chain; its full sequence is Cell division protein DivIB (284 aa).

Residues 1–21 are disordered; the sequence is MFGKRKDSKNKAMRDNEELTP. The Cytoplasmic portion of the chain corresponds to 1–63; the sequence is MFGKRKDSKN…GLRKRRLQKR (63 aa). A helical membrane pass occupies residues 64 to 84; sequence VITLASIFGISAIISLYAILP. Topologically, residues 85–284 are extracellular; it reads VSRVSNIEIE…VGAYAYPYBK (200 aa). In terms of domain architecture, POTRA spans 86-156; the sequence is SRVSNIEIEG…NVVKFKVTEY (71 aa).

It belongs to the FtsQ/DivIB family. DivIB subfamily.

The protein localises to the cell membrane. Cell division protein that may be involved in stabilizing or promoting the assembly of the division complex. This chain is Cell division protein DivIB, found in Ligilactobacillus salivarius (strain CECT 5713) (Lactobacillus salivarius).